We begin with the raw amino-acid sequence, 303 residues long: tRNA pseudouridine synthase-like 1 (303 aa).

Aspartate 66 (nucleophile) is an active-site residue. A Phosphoserine modification is found at serine 84. Residue tyrosine 130 participates in substrate binding.

This sequence belongs to the tRNA pseudouridine synthase TruA family.

It carries out the reaction a uridine in tRNA = a pseudouridine in tRNA. The chain is tRNA pseudouridine synthase-like 1 (PUSL1) from Homo sapiens (Human).